The following is a 161-amino-acid chain: Phosphohistidine phosphatase SixA (161 aa).

It belongs to the SixA phosphatase family.

In terms of biological role, exhibits phosphohistidine phosphatase activity towards the HPt domain of the ArcB sensor involved in the multistep His-Asp phosphorelay. This Escherichia coli (strain K12) protein is Phosphohistidine phosphatase SixA (sixA).